The following is a 348-amino-acid chain: Putative 4-hydroxythreonine-4-phosphate dehydrogenase 2 (348 aa).

Residues His-180, His-224, and His-279 each coordinate a divalent metal cation.

It belongs to the PdxA family. As to quaternary structure, homodimer. The cofactor is Zn(2+). Mg(2+) is required as a cofactor. Co(2+) serves as cofactor.

Its subcellular location is the cytoplasm. It catalyses the reaction 4-(phosphooxy)-L-threonine + NAD(+) = 3-amino-2-oxopropyl phosphate + CO2 + NADH. It participates in cofactor biosynthesis; pyridoxine 5'-phosphate biosynthesis; pyridoxine 5'-phosphate from D-erythrose 4-phosphate: step 4/5. Functionally, catalyzes the NAD(P)-dependent oxidation of 4-(phosphooxy)-L-threonine (HTP) into 2-amino-3-oxo-4-(phosphooxy)butyric acid which spontaneously decarboxylates to form 3-amino-2-oxopropyl phosphate (AHAP). The sequence is that of Putative 4-hydroxythreonine-4-phosphate dehydrogenase 2 from Rhizobium meliloti (strain 1021) (Ensifer meliloti).